A 397-amino-acid chain; its full sequence is MYSLIEAQLLGGKLVNRVMASLRRIIQRSLGYFCALNGILDFNTDIGTGNLRRYRVLFMYRLLHNFAVISLTLKFLFDFTDHFKYIESSTLITVNFFTYFTLVFFALLSSMGSCYQWQNRILAVLKELKHQRDLSRHMGYRVPRSKQNSIDYLLFALTVLLILRLSIHLATFTLSARMGFNHPCNCFLPECMIFSMNYLLFAILAEITRCWWSLQSGLKMVLLNRQLSTVAFNLWEIERLHTRFQCLIDLTSEVCSIFRYVTLAYMARNLWSGIVAGYLLVRFVIGNGLQDVELVYLVFSFITCIQPLMLSLLVNSMTSTTGSLVEVTRDILKISHKKSVNLERSIEWLSLQLTWQHTHVTIFGVFRINRSLAFRSASLILVHVLYMVQSDYISITN.

At 1-56 the chain is on the cytoplasmic side; it reads MYSLIEAQLLGGKLVNRVMASLRRIIQRSLGYFCALNGILDFNTDIGTGNLRRYRV. A helical membrane pass occupies residues 57 to 77; it reads LFMYRLLHNFAVISLTLKFLF. Topologically, residues 78–90 are extracellular; that stretch reads DFTDHFKYIESST. The helical transmembrane segment at 91–111 threads the bilayer; the sequence is LITVNFFTYFTLVFFALLSSM. The Cytoplasmic portion of the chain corresponds to 112 to 151; that stretch reads GSCYQWQNRILAVLKELKHQRDLSRHMGYRVPRSKQNSID. The helical transmembrane segment at 152–172 threads the bilayer; it reads YLLFALTVLLILRLSIHLATF. The Extracellular segment spans residues 173–186; sequence TLSARMGFNHPCNC. The helical transmembrane segment at 187-207 threads the bilayer; the sequence is FLPECMIFSMNYLLFAILAEI. Residues 208-268 lie on the Cytoplasmic side of the membrane; it reads TRCWWSLQSG…RYVTLAYMAR (61 aa). The helical transmembrane segment at 269-289 threads the bilayer; that stretch reads NLWSGIVAGYLLVRFVIGNGL. Topologically, residues 290-293 are extracellular; the sequence is QDVE. Residues 294 to 314 form a helical membrane-spanning segment; the sequence is LVYLVFSFITCIQPLMLSLLV. Over 315-375 the chain is Cytoplasmic; sequence NSMTSTTGSL…FRINRSLAFR (61 aa). The chain crosses the membrane as a helical span at residues 376 to 396; the sequence is SASLILVHVLYMVQSDYISIT. Position 397 (asparagine 397) is a topological domain, extracellular.

It belongs to the insect chemoreceptor superfamily. Gustatory receptor (GR) family. Gr22e subfamily.

Its subcellular location is the cell membrane. In terms of biological role, probable gustatory receptor which mediates acceptance or avoidance behavior, depending on its substrates. The chain is Putative gustatory receptor 85a (Gr85a) from Drosophila melanogaster (Fruit fly).